The following is a 267-amino-acid chain: Ribosomal RNA small subunit methyltransferase A (267 aa).

Positions 16, 18, 43, 64, 89, and 110 each coordinate S-adenosyl-L-methionine.

It belongs to the class I-like SAM-binding methyltransferase superfamily. rRNA adenine N(6)-methyltransferase family. RsmA subfamily.

It localises to the cytoplasm. It carries out the reaction adenosine(1518)/adenosine(1519) in 16S rRNA + 4 S-adenosyl-L-methionine = N(6)-dimethyladenosine(1518)/N(6)-dimethyladenosine(1519) in 16S rRNA + 4 S-adenosyl-L-homocysteine + 4 H(+). Specifically dimethylates two adjacent adenosines (A1518 and A1519) in the loop of a conserved hairpin near the 3'-end of 16S rRNA in the 30S particle. May play a critical role in biogenesis of 30S subunits. The chain is Ribosomal RNA small subunit methyltransferase A from Pseudomonas putida (strain ATCC 47054 / DSM 6125 / CFBP 8728 / NCIMB 11950 / KT2440).